Reading from the N-terminus, the 204-residue chain is Guanylate kinase (204 aa).

The Guanylate kinase-like domain occupies Gly4 to Gln182. Ala11–Thr18 contributes to the ATP binding site.

Belongs to the guanylate kinase family.

The protein resides in the cytoplasm. The enzyme catalyses GMP + ATP = GDP + ADP. Essential for recycling GMP and indirectly, cGMP. This Methylococcus capsulatus (strain ATCC 33009 / NCIMB 11132 / Bath) protein is Guanylate kinase.